The chain runs to 440 residues: NADH-quinone oxidoreductase subunit D (440 aa).

This sequence belongs to the complex I 49 kDa subunit family. NDH-1 is composed of 14 different subunits. Subunits NuoB, C, D, E, F, and G constitute the peripheral sector of the complex.

It is found in the cell membrane. The catalysed reaction is a quinone + NADH + 5 H(+)(in) = a quinol + NAD(+) + 4 H(+)(out). NDH-1 shuttles electrons from NADH, via FMN and iron-sulfur (Fe-S) centers, to quinones in the respiratory chain. The immediate electron acceptor for the enzyme in this species is believed to be a menaquinone. Couples the redox reaction to proton translocation (for every two electrons transferred, four hydrogen ions are translocated across the cytoplasmic membrane), and thus conserves the redox energy in a proton gradient. This is NADH-quinone oxidoreductase subunit D from Mycobacterium bovis (strain ATCC BAA-935 / AF2122/97).